A 206-amino-acid chain; its full sequence is Large ribosomal subunit protein uL4 (206 aa).

It belongs to the universal ribosomal protein uL4 family. As to quaternary structure, part of the 50S ribosomal subunit.

One of the primary rRNA binding proteins, this protein initially binds near the 5'-end of the 23S rRNA. It is important during the early stages of 50S assembly. It makes multiple contacts with different domains of the 23S rRNA in the assembled 50S subunit and ribosome. In terms of biological role, forms part of the polypeptide exit tunnel. The polypeptide is Large ribosomal subunit protein uL4 (Methylorubrum populi (strain ATCC BAA-705 / NCIMB 13946 / BJ001) (Methylobacterium populi)).